Consider the following 162-residue polypeptide: Ribosome-binding factor A (162 aa).

The tract at residues Asp-121–Asp-162 is disordered. The segment covering Arg-125–Pro-136 has biased composition (low complexity).

The protein belongs to the RbfA family. In terms of assembly, monomer. Binds 30S ribosomal subunits, but not 50S ribosomal subunits or 70S ribosomes.

It localises to the cytoplasm. Its function is as follows. One of several proteins that assist in the late maturation steps of the functional core of the 30S ribosomal subunit. Associates with free 30S ribosomal subunits (but not with 30S subunits that are part of 70S ribosomes or polysomes). Required for efficient processing of 16S rRNA. May interact with the 5'-terminal helix region of 16S rRNA. This chain is Ribosome-binding factor A, found in Rhodococcus jostii (strain RHA1).